The following is a 1363-amino-acid chain: Vascular endothelial growth factor receptor 3 (1363 aa).

Residues 1–24 (MQPGAALNLRLWLCLGLLQGLANG) form the signal peptide. Residues 25–775 (YSMTPPTLNI…EGSEDKGSME (751 aa)) are Extracellular-facing. N-linked (GlcNAc...) asparagine glycosylation is found at Asn33, Asn104, Asn166, Asn251, Asn299, and Asn411. Ig-like C2-type domains lie at 44–118 (GDSL…YIKA), 151–213 (KDSM…WGDQ), 230–326 (YDIQ…TEVI), 331–415 (PFIS…ISLE), 422–552 (PHIH…FYVT), 555–671 (PDGF…KYLS), and 678–764 (PRLT…ASVA). 2 cysteine pairs are disulfide-bonded: Cys51–Cys111 and Cys158–Cys206. Cys252 and Cys310 are oxidised to a cystine. Cystine bridges form between Cys445-Cys534, Cys466-Cys486, and Cys578-Cys653. N-linked (GlcNAc...) asparagine glycosylation is found at Asn515, Asn527, Asn582, Asn594, Asn683, and Asn690. A disulfide bridge connects residues Cys699 and Cys751. N-linked (GlcNAc...) asparagine glycosylation is present at Asn758. A helical transmembrane segment spans residues 776–796 (IVILIGTGVIAVFFWVLLLLI). At 797-1363 (FCNMKRPAHA…GSTFFADSSY (567 aa)) the chain is on the cytoplasmic side. Tyr830 and Tyr833 each carry phosphotyrosine; by SRC. The Protein kinase domain maps to 845 to 1173 (LHLGRVLGHG…DLVEILGDLL (329 aa)). ATP-binding positions include 851–859 (LGHGAFGKV) and Lys879. Residue Asp1037 is the Proton acceptor of the active site. Tyr1063 is subject to Phosphotyrosine; by autocatalysis and SRC. A phosphotyrosine; by autocatalysis mark is found at Tyr1068, Tyr1230, Tyr1231, and Tyr1265. The tract at residues 1288-1330 (ESRHRPEGSFSCKGPGQHMDIPRGHPDPQGRRRRPTQGAQGGK) is disordered. A compositionally biased stretch (basic and acidic residues) spans 1307-1317 (DIPRGHPDPQG). Residues Tyr1333 and Tyr1337 each carry the phosphotyrosine; by autocatalysis and SRC modification. Position 1363 is a phosphotyrosine; by autocatalysis (Tyr1363).

Belongs to the protein kinase superfamily. Tyr protein kinase family. CSF-1/PDGF receptor subfamily. In terms of assembly, interacts with VEGFC and VEGFD. Monomer in the absence of bound VEGFC or VEGFD. Homodimer in the presence of bound VEGFC or VEGFD. Can also form a heterodimer with KDR. Interacts with PTPN14; the interaction is enhanced by stimulation with VEGFC. Interacts with CRK, GRB2, PTK2/FAK1, SHC1, PIK3R1 and PTPN11/SHP-2. Identified in a complex with SRC and ITGB1. In terms of processing, autophosphorylated on tyrosine residues upon ligand binding. Autophosphorylation occurs in trans, i.e. one subunit of the dimeric receptor phosphorylates tyrosine residues on the other subunit. Phosphorylation in response to H(2)O(2) is mediated by a process that requires SRC and PRKCD activity. Phosphorylation at Tyr-1068 is required for autophosphorylation at additional tyrosine residues. Phosphorylation at Tyr-1063 and Tyr-1337 is important for interaction with CRK and subsequent activation of MAPK8. Phosphorylation at Tyr-1230, Tyr-1231 and Tyr-1337 is important for interaction with GRB2 and subsequent activation of the AKT1 and MAPK1/ERK2 and/or MAPK3/ERK1 signaling pathways. In response to endothelial cell adhesion onto collagen, can also be phosphorylated in the absence of FLT4 kinase activity by SRC. As to expression, expressed in adult lung and liver, and in fetal liver, brain, intestine and placenta.

The protein localises to the cell membrane. The protein resides in the cytoplasm. Its subcellular location is the nucleus. It catalyses the reaction L-tyrosyl-[protein] + ATP = O-phospho-L-tyrosyl-[protein] + ADP + H(+). With respect to regulation, present in an inactive conformation in the absence of bound ligand. Binding of VEGFC or VEGFD leads to dimerization and activation by autophosphorylation on tyrosine residues. In terms of biological role, tyrosine-protein kinase that acts as a cell-surface receptor for VEGFC and VEGFD, and plays an essential role in adult lymphangiogenesis and in the development of the vascular network and the cardiovascular system during embryonic development. Promotes proliferation, survival and migration of endothelial cells, and regulates angiogenic sprouting. Signaling by activated FLT4 leads to enhanced production of VEGFC, and to a lesser degree VEGFA, thereby creating a positive feedback loop that enhances FLT4 signaling. Modulates KDR signaling by forming heterodimers. Mediates activation of the MAPK1/ERK2, MAPK3/ERK1 signaling pathway, of MAPK8 and the JUN signaling pathway, and of the AKT1 signaling pathway. Phosphorylates SHC1. Mediates phosphorylation of PIK3R1, the regulatory subunit of phosphatidylinositol 3-kinase. Promotes phosphorylation of MAPK8 at 'Thr-183' and 'Tyr-185', and of AKT1 at 'Ser-473'. This Mus musculus (Mouse) protein is Vascular endothelial growth factor receptor 3 (Flt4).